An 89-amino-acid chain; its full sequence is UPF0473 protein Helmi_02360 (89 aa).

The protein belongs to the UPF0473 family.

In Heliobacterium modesticaldum (strain ATCC 51547 / Ice1), this protein is UPF0473 protein Helmi_02360.